The sequence spans 228 residues: Lipoprotein-releasing system ATP-binding protein LolD (228 aa).

The ABC transporter domain occupies L7–L227. A43–S50 lines the ATP pocket.

Belongs to the ABC transporter superfamily. Lipoprotein translocase (TC 3.A.1.125) family. In terms of assembly, the complex is composed of two ATP-binding proteins (LolD) and two transmembrane proteins (LolC and LolE).

The protein localises to the cell inner membrane. Functionally, part of the ABC transporter complex LolCDE involved in the translocation of mature outer membrane-directed lipoproteins, from the inner membrane to the periplasmic chaperone, LolA. Responsible for the formation of the LolA-lipoprotein complex in an ATP-dependent manner. The chain is Lipoprotein-releasing system ATP-binding protein LolD from Rhizobium meliloti (strain 1021) (Ensifer meliloti).